Consider the following 366-residue polypeptide: Protein-glutamate methylesterase/protein-glutamine glutaminase of group 2 operon (366 aa).

Residues 19–136 form the Response regulatory domain; that stretch reads RVLIVDDSAM…GQGLPAIMRD (118 aa). The residue at position 70 (Asp70) is a 4-aspartylphosphate. The 195-residue stretch at 162-356 folds into the CheB-type methylesterase domain; it reads PGASEDWIHA…ARMMLAAAAD (195 aa). Catalysis depends on residues Ser175, His201, and Asp298.

This sequence belongs to the CheB family. Phosphorylated by CheA. Phosphorylation of the N-terminal regulatory domain activates the methylesterase activity.

Its subcellular location is the cytoplasm. The enzyme catalyses [protein]-L-glutamate 5-O-methyl ester + H2O = L-glutamyl-[protein] + methanol + H(+). It carries out the reaction L-glutaminyl-[protein] + H2O = L-glutamyl-[protein] + NH4(+). In terms of biological role, involved in chemotaxis. Part of a chemotaxis signal transduction system that modulates chemotaxis in response to various stimuli. Catalyzes the demethylation of specific methylglutamate residues introduced into the chemoreceptors (methyl-accepting chemotaxis proteins or MCP) by CheR. Also mediates the irreversible deamidation of specific glutamine residues to glutamic acid. This chain is Protein-glutamate methylesterase/protein-glutamine glutaminase of group 2 operon, found in Cereibacter sphaeroides (Rhodobacter sphaeroides).